The chain runs to 319 residues: GTP cyclohydrolase MptA (319 aa).

It belongs to the GTP cyclohydrolase IV family. In terms of assembly, homodimer. Fe(2+) is required as a cofactor.

The enzyme catalyses GTP + H2O = 7,8-dihydroneopterin 2',3'-cyclic phosphate + formate + diphosphate + H(+). It functions in the pathway cofactor biosynthesis; 5,6,7,8-tetrahydromethanopterin biosynthesis. Converts GTP to 7,8-dihydro-D-neopterin 2',3'-cyclic phosphate, the first intermediate in the biosynthesis of coenzyme methanopterin. The protein is GTP cyclohydrolase MptA of Methanosarcina barkeri (strain Fusaro / DSM 804).